Here is a 58-residue protein sequence, read N- to C-terminus: Large ribosomal subunit protein uL30 (58 aa).

The protein belongs to the universal ribosomal protein uL30 family. Part of the 50S ribosomal subunit.

The sequence is that of Large ribosomal subunit protein uL30 from Vibrio campbellii (strain ATCC BAA-1116).